The following is a 167-amino-acid chain: Ureidoglycolate lyase (167 aa).

The protein belongs to the ureidoglycolate lyase family. As to quaternary structure, homodimer. Ni(2+) is required as a cofactor.

The catalysed reaction is (S)-ureidoglycolate = urea + glyoxylate. The protein operates within nitrogen metabolism; (S)-allantoin degradation. Functionally, catalyzes the catabolism of the allantoin degradation intermediate (S)-ureidoglycolate, generating urea and glyoxylate. Involved in the utilization of allantoin as nitrogen source. This is Ureidoglycolate lyase from Pseudomonas fluorescens (strain ATCC BAA-477 / NRRL B-23932 / Pf-5).